Here is a 463-residue protein sequence, read N- to C-terminus: General transcription factor IIH subunit 4 (463 aa).

Belongs to the TFB2 family. As to quaternary structure, component of the 7-subunit TFIIH core complex composed of XPB/ERCC3, XPD/ERCC2, GTF2H1, GTF2H2, GTF2H3, GTF2H4 and GTF2H5, which is active in NER. The core complex associates with the 3-subunit CDK-activating kinase (CAK) module composed of CCNH/cyclin H, CDK7 and MNAT1 to form the 10-subunit holoenzyme (holo-TFIIH) active in transcription. Part of TBP-based Pol II pre-initiation complex (PIC), in which Pol II core assembles with general transcription factors and other specific initiation factors including GTF2E1, GTF2E2, GTF2F1, GTF2F2, TCEA1, ERCC2, ERCC3, GTF2H2, GTF2H3, GTF2H4, GTF2H5, GTF2A1, GTF2A2, GTF2B and TBP; this large multi-subunit PIC complex mediates DNA unwinding and targets Pol II core to the transcription start site where the first phosphodiester bond forms.

It is found in the nucleus. In terms of biological role, component of the general transcription and DNA repair factor IIH (TFIIH) core complex, which is involved in general and transcription-coupled nucleotide excision repair (NER) of damaged DNA and, when complexed to CAK, in RNA transcription by RNA polymerase II. In NER, TFIIH acts by opening DNA around the lesion to allow the excision of the damaged oligonucleotide and its replacement by a new DNA fragment. In transcription, TFIIH has an essential role in transcription initiation. When the pre-initiation complex (PIC) has been established, TFIIH is required for promoter opening and promoter escape. Phosphorylation of the C-terminal tail (CTD) of the largest subunit of RNA polymerase II by the kinase module CAK controls the initiation of transcription. In Mus musculus (Mouse), this protein is General transcription factor IIH subunit 4 (Gtf2h4).